The sequence spans 339 residues: 5-dehydro-2-deoxygluconokinase (339 aa).

This sequence belongs to the carbohydrate kinase PfkB family.

It carries out the reaction 5-dehydro-2-deoxy-D-gluconate + ATP = 6-phospho-5-dehydro-2-deoxy-D-gluconate + ADP + H(+). The protein operates within polyol metabolism; myo-inositol degradation into acetyl-CoA; acetyl-CoA from myo-inositol: step 5/7. Functionally, catalyzes the phosphorylation of 5-dehydro-2-deoxy-D-gluconate (2-deoxy-5-keto-D-gluconate or DKG) to 6-phospho-5-dehydro-2-deoxy-D-gluconate (DKGP). The protein is 5-dehydro-2-deoxygluconokinase of Clostridium botulinum (strain Alaska E43 / Type E3).